Consider the following 64-residue polypeptide: Disintegrin schistatin (64 aa).

In terms of domain architecture, Disintegrin spans 1 to 64 (NSVHPCCDPV…PDCPRNRYNV (64 aa)). 4 disulfides stabilise this stretch: Cys6/Cys29, Cys20/Cys26, Cys25/Cys50, and Cys38/Cys57. The short motif at 42–44 (RGD) is the Cell attachment site element.

This sequence belongs to the disintegrin family. Dimeric disintegrin subfamily. As to quaternary structure, homodimer; disulfide-linked. In terms of tissue distribution, expressed by the venom gland.

It is found in the secreted. May bind to both alpha-IIb/beta-3 (ITGA2B/ITGB3) and alpha-V/beta-3 (ITGAV/ITGB3) integrins, and may inhibit platelet aggregation. This Echis carinatus (Saw-scaled viper) protein is Disintegrin schistatin.